Consider the following 399-residue polypeptide: Elongation factor Tu (399 aa).

Residues Lys10–Ala209 form the tr-type G domain. Positions Gly19 to Thr26 are G1. GTP is bound at residue Gly19–Thr26. Residue Thr26 coordinates Mg(2+). Positions Gly60 to Ala64 are G2. Residues Asp81–Gly84 form a G3 region. Residues Asp81–His85 and Asn136–Asp139 each bind GTP. Residues Asn136–Asp139 form a G4 region. Residues Ser174–Leu176 form a G5 region.

This sequence belongs to the TRAFAC class translation factor GTPase superfamily. Classic translation factor GTPase family. EF-Tu/EF-1A subfamily. In terms of assembly, monomer.

The protein localises to the cytoplasm. The enzyme catalyses GTP + H2O = GDP + phosphate + H(+). Its function is as follows. GTP hydrolase that promotes the GTP-dependent binding of aminoacyl-tRNA to the A-site of ribosomes during protein biosynthesis. This is Elongation factor Tu from Campylobacter lari (strain RM2100 / D67 / ATCC BAA-1060).